Reading from the N-terminus, the 258-residue chain is Deoxyribose-phosphate aldolase (258 aa).

Catalysis depends on Asp102, which acts as the Proton donor/acceptor. The active-site Schiff-base intermediate with acetaldehyde is the Lys165. Catalysis depends on Lys199, which acts as the Proton donor/acceptor.

This sequence belongs to the DeoC/FbaB aldolase family. DeoC type 2 subfamily.

The protein resides in the cytoplasm. It carries out the reaction 2-deoxy-D-ribose 5-phosphate = D-glyceraldehyde 3-phosphate + acetaldehyde. It participates in carbohydrate degradation; 2-deoxy-D-ribose 1-phosphate degradation; D-glyceraldehyde 3-phosphate and acetaldehyde from 2-deoxy-alpha-D-ribose 1-phosphate: step 2/2. In terms of biological role, catalyzes a reversible aldol reaction between acetaldehyde and D-glyceraldehyde 3-phosphate to generate 2-deoxy-D-ribose 5-phosphate. This Aliivibrio fischeri (strain MJ11) (Vibrio fischeri) protein is Deoxyribose-phosphate aldolase.